Consider the following 264-residue polypeptide: 1H-3-hydroxy-4-oxoquinoline 2,4-dioxygenase (264 aa).

Substrate-binding positions include 30-32 (WCQ), 94-95 (TS), and Trp153. Residue His244 is the Proton donor/acceptor of the active site.

It belongs to the AB hydrolase superfamily. Requires None. Contrary to most other dioxygenases, this enzyme does not require a cofactor for catalysis. as cofactor.

The enzyme catalyses 3-hydroxy-1H-quinolin-4-one + O2 = N-formylanthranilate + CO + H(+). Ring-cleaving dioxygenase involved in oxoquinoline degradation and utilization. This chain is 1H-3-hydroxy-4-oxoquinoline 2,4-dioxygenase (qdo), found in Pseudomonas putida (Arthrobacter siderocapsulatus).